Consider the following 240-residue polypeptide: UDP-2,3-diacylglucosamine hydrolase (240 aa).

Positions 8, 10, 41, 79, and 114 each coordinate Mn(2+). 79 to 80 (NR) serves as a coordination point for substrate. Positions 122, 160, 164, 167, and 195 each coordinate substrate. The Mn(2+) site is built by histidine 195 and histidine 197.

Belongs to the LpxH family. It depends on Mn(2+) as a cofactor.

Its subcellular location is the cell inner membrane. The catalysed reaction is UDP-2-N,3-O-bis[(3R)-3-hydroxytetradecanoyl]-alpha-D-glucosamine + H2O = 2-N,3-O-bis[(3R)-3-hydroxytetradecanoyl]-alpha-D-glucosaminyl 1-phosphate + UMP + 2 H(+). It functions in the pathway glycolipid biosynthesis; lipid IV(A) biosynthesis; lipid IV(A) from (3R)-3-hydroxytetradecanoyl-[acyl-carrier-protein] and UDP-N-acetyl-alpha-D-glucosamine: step 4/6. Its function is as follows. Hydrolyzes the pyrophosphate bond of UDP-2,3-diacylglucosamine to yield 2,3-diacylglucosamine 1-phosphate (lipid X) and UMP by catalyzing the attack of water at the alpha-P atom. Involved in the biosynthesis of lipid A, a phosphorylated glycolipid that anchors the lipopolysaccharide to the outer membrane of the cell. The sequence is that of UDP-2,3-diacylglucosamine hydrolase from Yersinia pestis bv. Antiqua (strain Angola).